A 586-amino-acid polypeptide reads, in one-letter code: Kelch-like protein 7 (586 aa).

In terms of domain architecture, BTB spans 44–111; sequence CDVILMVQER…AYTARISVNS (68 aa). The 103-residue stretch at 146 to 248 folds into the BACK domain; it reads CLGISVLAEC…SKNFLSKTVQ (103 aa). Kelch repeat units follow at residues 294–336, 337–382, 383–430, 431–481, 483–528, and 530–575; these read RIAL…FWDN, VVYI…AAEG, KIYT…EANG, LIYV…FVKD, IFAV…AVGS, and VYVL…CVVD.

As to quaternary structure, homodimer. Component of the BCR(KLHL7) E3 ubiquitin ligase complex, at least composed of CUL3 and KLHL7 and RBX1. As to expression, widely expressed, with highest levels in adult and fetal heart, CNS and adult testis.

The protein localises to the nucleus. It is found in the cytoplasm. The protein operates within protein modification; protein ubiquitination. Its function is as follows. Substrate-specific adapter of a BCR (BTB-CUL3-RBX1) E3 ubiquitin ligase complex. The BCR(KLHL7) complex acts by mediating ubiquitination and subsequent degradation of substrate proteins. Probably mediates 'Lys-48'-linked ubiquitination. The chain is Kelch-like protein 7 (KLHL7) from Homo sapiens (Human).